Here is a 417-residue protein sequence, read N- to C-terminus: Gamma-glutamyl phosphate reductase (417 aa).

It belongs to the gamma-glutamyl phosphate reductase family.

It is found in the cytoplasm. The catalysed reaction is L-glutamate 5-semialdehyde + phosphate + NADP(+) = L-glutamyl 5-phosphate + NADPH + H(+). The protein operates within amino-acid biosynthesis; L-proline biosynthesis; L-glutamate 5-semialdehyde from L-glutamate: step 2/2. In terms of biological role, catalyzes the NADPH-dependent reduction of L-glutamate 5-phosphate into L-glutamate 5-semialdehyde and phosphate. The product spontaneously undergoes cyclization to form 1-pyrroline-5-carboxylate. This chain is Gamma-glutamyl phosphate reductase, found in Aeromonas salmonicida (strain A449).